We begin with the raw amino-acid sequence, 233 residues long: B-cell lymphoma/leukemia 10 (233 aa).

At methionine 1 the chain carries N-acetylmethionine. The region spanning 13-101 (LTEVKKDALE…QNFLIQKITD (89 aa)) is the CARD domain. Residues lysine 17, lysine 31, and lysine 63 each participate in a glycyl lysine isopeptide (Lys-Gly) (interchain with G-Cter in ubiquitin) cross-link. Serine 138 carries the phosphoserine modification. Residues 187-233 (FSSTTLPRPGDPGAPPLPPDLQLEEEGTCANSSEMFLPLRSRTVSRQ) are disordered. The segment covering 195-205 (PGDPGAPPLPP) has biased composition (pro residues).

As to quaternary structure, homomultimer; homooligomerized following recruitment by CARD domain-containing proteins that form a nucleating helical template that recruits BCL10 via CARD-CARD interaction. Self-associates by CARD-CARD interaction and interacts with other CARD-proteins such as CARD9, CARD10, CARD11 and CARD14. Forms a complex with CARD14 and MALT1; resulting in the formation of a CBM (CARD14-BCL10-MALT1) complex. Forms a complex with CARD11 and MALT1; resulting in the formation of a CBM (CARD11-BCL10-MALT1) complex. Forms a complex with CARD9 and MALT1; resulting in the formation of a CBM (CARD9-BCL10-MALT1) complex. Found in a membrane raft complex, at least composed of BCL10, CARD11, DPP4 and IKBKB. Binds caspase-9 with its C-terminal domain. Interacts with TRAF2 and BIRC2/c-IAP2. Interacts with PELI2 and SOCS3; these interactions may be mutually exclusive. In terms of processing, phosphorylated. Phosphorylation results in dissociation from TRAF2 and binding to BIRC2/c-IAP2. Phosphorylated by IKBKB/IKKB. Ubiquitinated via both 'Lys-63'-linked and linear ('Met-1'-linked) polyubiquitin chains in response to T-cell receptor (TCR) activation. Ubiquitination is recognized by IKBKG/NEMO, the regulatory subunit of I-kappa-B kinase (IKK), and is required for TCR-induced NF-kappa-B activation. Linear ubiquitination at Lys-17, Lys-31 and Lys-63 is mediated by RNF31/HOIP; linear ubiquitination is recognized with much higher affinity than 'Lys-63'-linked ubiquitin by IKBKG/NEMO. CARD11 is required for linear ubiquitination by HOIP by promoting the targeting of BCL10 to RNF31/HOIP. Post-translationally, proteolytically cleaved by MALT1; required for T-cell activation. As to expression, ubiquitous.

The protein resides in the cytoplasm. Its subcellular location is the perinuclear region. The protein localises to the membrane raft. In terms of biological role, plays a key role in both adaptive and innate immune signaling by bridging CARD domain-containing proteins to immune activation. Acts by channeling adaptive and innate immune signaling downstream of CARD domain-containing proteins CARD9, CARD11 and CARD14 to activate NF-kappa-B and MAP kinase p38 (MAPK11, MAPK12, MAPK13 and/or MAPK14) pathways which stimulate expression of genes encoding pro-inflammatory cytokines and chemokines. Recruited by activated CARD domain-containing proteins: homooligomerized CARD domain-containing proteins form a nucleating helical template that recruits BCL10 via CARD-CARD interaction, thereby promoting polymerization of BCL10, subsequent recruitment of MALT1 and formation of a CBM complex. This leads to activation of NF-kappa-B and MAP kinase p38 (MAPK11, MAPK12, MAPK13 and/or MAPK14) pathways which stimulate expression of genes encoding pro-inflammatory cytokines and chemokines. Activated by CARD9 downstream of C-type lectin receptors; CARD9-mediated signals are essential for antifungal immunity. Activated by CARD11 downstream of T-cell receptor (TCR) and B-cell receptor (BCR). Promotes apoptosis, pro-caspase-9 maturation and activation of NF-kappa-B via NIK and IKK. The protein is B-cell lymphoma/leukemia 10 of Homo sapiens (Human).